Here is a 142-residue protein sequence, read N- to C-terminus: MKVLFSYGTYNNRPYKACGVYESDNRENDGVITDYLSTIPDSYADNGFKVLAAVKDPTITREWIDSQAFEALIEHDQIKVGFYLLDDMEEEDIPDDVDERDTDPRFIPRKEFAYLLEKWLDFYHRPITDMNYQEIIDTKDAY.

This sequence belongs to the UPF0275 family.

The chain is UPF0275 protein PM0505 from Pasteurella multocida (strain Pm70).